A 603-amino-acid polypeptide reads, in one-letter code: NADH-ubiquinone oxidoreductase chain 5 (603 aa).

15 consecutive transmembrane segments (helical) span residues 38-58, 87-107, 122-142, 144-160, 171-191, 211-233, 241-261, 272-292, 301-320, 325-347, 370-390, 407-429, 458-478, 482-502, and 582-602; these read SIVA…MCLD, MMFI…SLWY, LIFL…QLFI, WEGV…WWYA, AILY…WFIL, TPLL…HPWL, TPVS…FLLI, LIQT…AVCA, IVAF…IGIN, AFLH…GSII, STSL…TGFY, WALS…MILL, AAGS…ASPF, IPLY…LTAL, and GMIK…LLLI.

This sequence belongs to the complex I subunit 5 family. In terms of assembly, core subunit of respiratory chain NADH dehydrogenase (Complex I) which is composed of 45 different subunits.

It localises to the mitochondrion inner membrane. It catalyses the reaction a ubiquinone + NADH + 5 H(+)(in) = a ubiquinol + NAD(+) + 4 H(+)(out). Its function is as follows. Core subunit of the mitochondrial membrane respiratory chain NADH dehydrogenase (Complex I) which catalyzes electron transfer from NADH through the respiratory chain, using ubiquinone as an electron acceptor. Essential for the catalytic activity and assembly of complex I. The protein is NADH-ubiquinone oxidoreductase chain 5 (MT-ND5) of Homo sapiens (Human).